The following is a 246-amino-acid chain: DNA-directed RNA polymerase subunit alpha (246 aa).

The protein belongs to the RNA polymerase alpha chain family. In plastids the minimal PEP RNA polymerase catalytic core is composed of four subunits: alpha, beta, beta', and beta''. When a (nuclear-encoded) sigma factor is associated with the core the holoenzyme is formed, which can initiate transcription (Potential).

It localises to the plastid. It carries out the reaction RNA(n) + a ribonucleoside 5'-triphosphate = RNA(n+1) + diphosphate. In terms of biological role, DNA-dependent RNA polymerase catalyzes the transcription of DNA into RNA using the four ribonucleoside triphosphates as substrates. The polypeptide is DNA-directed RNA polymerase subunit alpha (rpoA) (Helicosporidium sp. subsp. Simulium jonesii (Green alga)).